We begin with the raw amino-acid sequence, 184 residues long: Cathelicidin-related peptide Pt_CRAMP2 (184 aa).

Residues Met-1–Ser-22 form the signal peptide. A propeptide spanning residues Leu-23–Val-150 is cleaved from the precursor. Cystine bridges form between Cys-81–Cys-92 and Cys-103–Cys-120. The segment covering Glu-125–Lys-144 has biased composition (acidic residues). The tract at residues Glu-125 to Pro-147 is disordered.

The protein belongs to the cathelicidin family. In terms of tissue distribution, expressed by the venom gland.

The protein localises to the secreted. It localises to the target cell membrane. Functionally, potent antimicrobial peptide against most of Gram-negative bacteria, some Gram-positive bacteria (Bacillus) and some fungi (C.albicans, P.pastoris, A.terreus, A.nidulans, and C.globosum). Adopts an amphipathic alpha helical conformation, that may allow to partition into the target membrane. No hemolytic and cytotoxic activities have been observed on mammalian cells. This Pseudonaja textilis (Eastern brown snake) protein is Cathelicidin-related peptide Pt_CRAMP2.